A 591-amino-acid polypeptide reads, in one-letter code: Protein CBFA2T3 (591 aa).

The disordered stretch occupies residues 1-105; that stretch reads MPGGTPRLEG…SSSASLSTHQ (105 aa). Residues 1–381 are mediates localization to the nucleus; that stretch reads MPGGTPRLEG…ADREELNHWI (381 aa). Residues 41–52 show a composition bias toward pro residues; it reads STPPNMPPPPPA. Polar residues predominate over residues 55-105; that stretch reads QGATRHPSFTPSTMMNGSSHSPTAINGAPSTPNGFSNGPATSSSASLSTHQ. Residues 112–207 form the TAFH domain; the sequence is ARQLSKLKRF…SPAQYLAQHE (96 aa). Disordered regions lie at residues 226–291 and 386–420; these read LEVS…PPQH and DAED…DFAP. Positions 230-256 are enriched in basic and acidic residues; sequence ESGKRRTPDRTKENGLDRDPLHPEHLS. Residues 263–274 show a composition bias toward polar residues; sequence SPAQRYSPSNGL. Residues 279–290 are compositionally biased toward pro residues; that stretch reads NGLPHPPGPPPQ. The span at 394 to 410 shows a compositional bias: low complexity; that stretch reads SPPSARPHNSSSSSEAP. The stretch at 433-488 forms a coiled coil; the sequence is RKAEEAVNEVKRQAMSELQKAVSDAERKAHELITTERAKMERALAEAKRQASEDAL. Residues C501, C504, C512, C515, C521, C525, H533, and C537 each coordinate Zn(2+). Residues 501–537 form an MYND-type zinc finger; it reads CWNCGRKASETCSGCNTARYCGSFCQHKDWEKHHHVC. The interval 548–591 is disordered; sequence SVPTAVGQPEAVPPMASSPSDAGSAGASRAGTPGTPAPLESASR. A compositionally biased stretch (low complexity) spans 560–585; sequence PPMASSPSDAGSAGASRAGTPGTPAP.

Belongs to the CBFA2T family.

It localises to the nucleus. The protein localises to the nucleolus. The protein resides in the nucleoplasm. Its subcellular location is the golgi apparatus. In terms of biological role, functions as a transcriptional repressor. Regulates the proliferation and the differentiation of erythroid progenitors. Plays a role in granulocyte differentiation. May also function as an A-kinase-anchoring protein. This is Protein CBFA2T3 (CBFA2T3) from Gallus gallus (Chicken).